Here is a 698-residue protein sequence, read N- to C-terminus: Elongation factor G (698 aa).

The region spanning 10–285 (AGTRNIGIMA…AVVDFLPNPL (276 aa)) is the tr-type G domain. GTP-binding positions include 19–26 (AHIDAGKT), 83–87 (DTPGH), and 137–140 (NKMD).

This sequence belongs to the TRAFAC class translation factor GTPase superfamily. Classic translation factor GTPase family. EF-G/EF-2 subfamily.

It is found in the cytoplasm. Catalyzes the GTP-dependent ribosomal translocation step during translation elongation. During this step, the ribosome changes from the pre-translocational (PRE) to the post-translocational (POST) state as the newly formed A-site-bound peptidyl-tRNA and P-site-bound deacylated tRNA move to the P and E sites, respectively. Catalyzes the coordinated movement of the two tRNA molecules, the mRNA and conformational changes in the ribosome. The sequence is that of Elongation factor G from Frankia casuarinae (strain DSM 45818 / CECT 9043 / HFP020203 / CcI3).